A 379-amino-acid chain; its full sequence is Glutamate 5-kinase (379 aa).

Lysine 17 provides a ligand contact to ATP. 3 residues coordinate substrate: serine 57, aspartate 144, and asparagine 156. An ATP-binding site is contributed by 176–177; the sequence is SD. In terms of domain architecture, PUA spans 282–359; sequence SGILMIDQGA…EEIESILGYE (78 aa).

It belongs to the glutamate 5-kinase family.

The protein resides in the cytoplasm. It catalyses the reaction L-glutamate + ATP = L-glutamyl 5-phosphate + ADP. The protein operates within amino-acid biosynthesis; L-proline biosynthesis; L-glutamate 5-semialdehyde from L-glutamate: step 1/2. Catalyzes the transfer of a phosphate group to glutamate to form L-glutamate 5-phosphate. This Bartonella henselae (strain ATCC 49882 / DSM 28221 / CCUG 30454 / Houston 1) (Rochalimaea henselae) protein is Glutamate 5-kinase.